The chain runs to 477 residues: Protoporphyrinogen oxidase (477 aa).

Residues 9 to 14 (GGGISG), Trp-42, 57 to 60 (GPRG), Val-257, Ala-449, and 454 to 456 (VAV) contribute to the FAD site.

Belongs to the protoporphyrinogen/coproporphyrinogen oxidase family. Protoporphyrinogen oxidase subfamily. Monomer. Homodimer. Requires FAD as cofactor.

The protein localises to the mitochondrion inner membrane. The enzyme catalyses protoporphyrinogen IX + 3 O2 = protoporphyrin IX + 3 H2O2. The protein operates within porphyrin-containing compound metabolism; protoporphyrin-IX biosynthesis; protoporphyrin-IX from protoporphyrinogen-IX: step 1/1. Its activity is regulated as follows. Inhibited by acifluorfen. Its function is as follows. Catalyzes the 6-electron oxidation of protoporphyrinogen-IX to form protoporphyrin-IX. In Mus musculus (Mouse), this protein is Protoporphyrinogen oxidase (Ppox).